Here is a 359-residue protein sequence, read N- to C-terminus: Alanine racemase, biosynthetic (359 aa).

Lysine 34 functions as the Proton acceptor; specific for D-alanine in the catalytic mechanism. Lysine 34 carries the post-translational modification N6-(pyridoxal phosphate)lysine. N6-carboxylysine is present on lysine 122. A substrate-binding site is contributed by arginine 129. The active-site Proton acceptor; specific for L-alanine is the tyrosine 255. Methionine 303 contributes to the substrate binding site.

This sequence belongs to the alanine racemase family. As to quaternary structure, homodimer. The cofactor is pyridoxal 5'-phosphate.

It carries out the reaction L-alanine = D-alanine. Its pathway is amino-acid biosynthesis; D-alanine biosynthesis; D-alanine from L-alanine: step 1/1. It participates in cell wall biogenesis; peptidoglycan biosynthesis. Functionally, catalyzes the interconversion of L-alanine and D-alanine. Provides the D-alanine required for cell wall biosynthesis. This chain is Alanine racemase, biosynthetic, found in Escherichia coli (strain K12).